The chain runs to 496 residues: Cytochrome P450 monooxygenase cle4 (496 aa).

Residues 12–34 (FFTSPFPLTVGILSISLSGVLWY) form a helical membrane-spanning segment. A heme-binding site is contributed by cysteine 435.

The protein belongs to the cytochrome P450 family. The cofactor is heme.

Its subcellular location is the membrane. The protein operates within secondary metabolite biosynthesis; terpenoid biosynthesis. In terms of biological role, cytochrome P450 monooxygenase; part of the cluster A that mediates the biosynthesis of chevalone E and its oxidized derivatives that possess a unique five-membered lactone ring and can synergistically enhance the cytotoxicity of doxorubicin (DOX) in breast cancer cells. Within the pathway, cle4 is involved in hydroxylation of the chavalone E scaffold at positions C-11 and C-12 and contributes with cle2 to the production of seven oxidation derivatives. The molecular scaffold is commonly biosynthesized by a series of enzymes including the non-reducing polyketide synthase (NR-PKS) cle1 that produces the alpha-pyrone triacetic acid lactone (TAL); The membrane-bound prenyltransferase cle5 that accepts TAL as its substrate to perform a C-3 geranylgeranylation reaction, in which the pathway-dedicated GGPS cle6 is required to provide GGPP, the other substrate of cle5; the FAD-dependent monooxygenase Cle3 that forms an (S)-epoxide ring at the terminal olefin of the geranylgeranyl group; and the terpene cyclase Cle7 that catalyzes the cyclization of the prenyl group that yields the pentacyclic pathway intermediate chevalone E. Chevalone E can derivatize into seven new oxidized analogs by the cytochrome P450 monooxygenases cle2 (acting at C-20) and cle4 (acting at C-11 and C-12). This chain is Cytochrome P450 monooxygenase cle4, found in Aspergillus versicolor.